The primary structure comprises 318 residues: uncharacterized protein (318 aa).

A run of 2 helical transmembrane segments spans residues 230–250 and 264–284; these read VWTY…SFLI and ASLM…LGVI.

The protein belongs to the glycosyltransferase 2 family. GtrB subfamily.

It is found in the cell membrane. This is an uncharacterized protein from Synechocystis sp. (strain ATCC 27184 / PCC 6803 / Kazusa).